Consider the following 880-residue polypeptide: Valine--tRNA ligase (880 aa).

Positions 48–58 (PNITGKLHLGH) match the 'HIGH' region motif. A 'KMSKS' region motif is present at residues 527 to 531 (KMSKS). Position 530 (Lys530) interacts with ATP. 2 coiled-coil regions span residues 717–741 (KEEL…AIRN) and 810–880 (LFDL…KSLK).

The protein belongs to the class-I aminoacyl-tRNA synthetase family. ValS type 1 subfamily. Monomer.

Its subcellular location is the cytoplasm. The enzyme catalyses tRNA(Val) + L-valine + ATP = L-valyl-tRNA(Val) + AMP + diphosphate. In terms of biological role, catalyzes the attachment of valine to tRNA(Val). As ValRS can inadvertently accommodate and process structurally similar amino acids such as threonine, to avoid such errors, it has a 'posttransfer' editing activity that hydrolyzes mischarged Thr-tRNA(Val) in a tRNA-dependent manner. The sequence is that of Valine--tRNA ligase from Clostridium tetani (strain Massachusetts / E88).